The primary structure comprises 142 residues: Putative pre-16S rRNA nuclease (142 aa).

The protein belongs to the YqgF nuclease family.

It is found in the cytoplasm. Its function is as follows. Could be a nuclease involved in processing of the 5'-end of pre-16S rRNA. This chain is Putative pre-16S rRNA nuclease, found in Chlorobaculum tepidum (strain ATCC 49652 / DSM 12025 / NBRC 103806 / TLS) (Chlorobium tepidum).